The primary structure comprises 789 residues: MKDKNINSTSFSISKASKAINSYLQLFPEQQWNEVIKITLLFGIDCIQEHFALSTPRIDQLRNIIIHPESSPLDSILTKTPLKNNIINNNQNFNNKINHQHNHNFKYQQDENNNTDDEQEQEQEQQQKQNEIINKITTPIKTPSPPPPPQTSQTSQTSSTSFSIKSNNKTNNNNNNNNNNNNNNNNPFSTITPIHKNHQNSISTSSSKQLRSSLKNTPSKFAFFTSSTSSENNNNNNKNINNGNNNNNNDGGDINRNDSSSNNNNNTHNSTLFIDDDDGDNNDEINDENDINSNNLTFSSSTKSKKINNNNNSIDSNNTNINNNNNNYNNSINKLSGRESKVEFNEDRNQYSIYSRGDTSSSNNSDLIFENNNNNNSSIYNESATQVEIFYDKNGQPINHLYQEFQFQQHQNGDQNNNSQFLDESMLKSNNSSNNNNNNKNNNNNNNNNNNNNNNNNNNSSSNRNSSINNGNNQSSLFYNSASTNQNNNNNNITTSLNYKVISSPLKNLNLNPTTTNEQISKSVNFDRNQNQKSPFLNNTSMPNINFNEQSQQQSQNQYYQQQQQQQQQQSNNSMNQSINYKDINPSFLSSTPLEFNDTVDTSGSSLKYSTSSNNSKGFSNISNNSKKIFDKSNFNLGSMGNSSFGMSNFNSTSFGASTGGASHLTHTFHNNGNSDGDDDQSNNSNSLFYTPRSTHIMNSMNSNFNHHHNNNNQLFNNSGSNKQMGFPIPPNAVPIHNHTHHHYHNGKGNNTDQELEIIDLEDQPTRFNNKNNNNSNGFTSNKRFYNQH.

5 disordered regions span residues 107 to 326 (YQQD…NNNN), 426 to 491 (MLKS…NNNN), 523 to 625 (SVNF…ISNN), 666 to 751 (THTF…KGNN), and 765 to 789 (PTRF…YNQH). Positions 113–123 (NNTDDEQEQEQ) are enriched in acidic residues. Low complexity-rich tracts occupy residues 124–141 (EQQQ…TPIK), 151–194 (TSQT…ITPI), 201–213 (SIST…LRSS), and 225–270 (TSST…THNS). Acidic residues predominate over residues 274-290 (IDDDDGDNNDEINDEND). Composition is skewed to low complexity over residues 291 to 326 (INSN…NNNN) and 429 to 491 (SNNS…NNNN). Positions 523-549 (SVNFDRNQNQKSPFLNNTSMPNINFNE) are enriched in polar residues. 4 stretches are compositionally biased toward low complexity: residues 550-581 (QSQQ…SINY), 602-617 (TSGS…NNSK), 696-722 (HIMN…SGSN), and 766-789 (TRFN…YNQH).

This is an uncharacterized protein from Dictyostelium discoideum (Social amoeba).